The primary structure comprises 580 residues: MSESSVNADTPKNTNDVLNGAYQSATTEPEGQYRSATDNPSLYQVPTHGSLYRNLSNSASAYYPANGNMNSREPANELSDISSLAEKGELEPPMAKLLSDPDFQGKQFPTVEAPELFIFELAPDSPSIALNWTFWRKMKTTSIYAYASLTIAWGSSVLSPASATLAKKYHIGMTTSLLNVSLFMLGYCLGPICWAPMSEITGRKTPLYIGLFLFSVFQIAVATAQDIQTIMICRFFGGYGACVPLCVVAAAFADMYPNRYRGTAITIFAAVIFVGPLVAPIVGGFLTKSYLGWRWTEYITSFMGFLSIILIYLFCEETYLKTITENKVQEYREITGNQLVHARSEEESLSARDIIMNYLLIPLKMLATEPIVFLVSLYCSFVYAIIYLLLEAYPVIFQEGRHFPLGVSALPYIGILVGVFIGCGINCLFEPWYFRQVIKAGNKPAPEARLPPMMIGSFLFPAGIFWLAWSGYYTYVHWIVPTLSGLLTGAGILLIFLQCLNYLLDAYLFRAASVFAANVIMRSAVAGGFPLFAVQMFHNMGVGWAGSLLGFIATALIPMPFAFFFFGKKIRAKSKMTAQF.

Over residues 1–44 (MSESSVNADTPKNTNDVLNGAYQSATTEPEGQYRSATDNPSLYQ) the composition is skewed to polar residues. A disordered region spans residues 1-45 (MSESSVNADTPKNTNDVLNGAYQSATTEPEGQYRSATDNPSLYQV). S99 is subject to Phosphoserine. Transmembrane regions (helical) follow at residues 143 to 163 (IYAY…PASA), 177 to 197 (LLNV…WAPM), 207 to 227 (LYIG…AQDI), 235 to 255 (FFGG…FADM), 265 to 285 (ITIF…VGGF), 295 to 315 (WTEY…YLFC), 370 to 390 (PIVF…YLLL), 405 to 425 (LGVS…GCGI), 450 to 470 (LPPM…LAWS), 476 to 496 (VHWI…LLIF), 511 to 533 (AASV…PLFA), and 546 to 566 (GSLL…FFFF).

Belongs to the major facilitator superfamily. CAR1 family.

The protein resides in the membrane. This is an uncharacterized protein from Schizosaccharomyces pombe (strain 972 / ATCC 24843) (Fission yeast).